A 1073-amino-acid polypeptide reads, in one-letter code: Carbamoyl phosphate synthase large chain (1073 aa).

The tract at residues 2–403 (PKRTDIKSIL…SLQKALRGLE (402 aa)) is carboxyphosphate synthetic domain. R129, R169, G175, G176, E208, L210, E215, G241, I242, H243, Q285, and E299 together coordinate ATP. In terms of domain architecture, ATP-grasp 1 spans 133-328 (DVAMKKIGLE…IAKVAAKLAV (196 aa)). Residues Q285, E299, and N301 each contribute to the Mg(2+) site. Mn(2+) contacts are provided by Q285, E299, and N301. The interval 404 to 553 (VGATGFDPKV…YSTYEEECEA (150 aa)) is oligomerization domain. A carbamoyl phosphate synthetic domain region spans residues 554-936 (NPSTDREKIM…AFAKAQLGSN (383 aa)). The ATP-grasp 2 domain occupies 679-870 (QHAVERLKLK…LAKVAARVMA (192 aa)). 10 residues coordinate ATP: R715, H754, L756, E761, G786, V787, H788, S789, Q829, and E841. Positions 829, 841, and 843 each coordinate Mg(2+). 3 residues coordinate Mn(2+): Q829, E841, and N843. An MGS-like domain is found at 937-1073 (STMKKHGRAL…SVQEMHAQIK (137 aa)). Positions 937–1073 (STMKKHGRAL…SVQEMHAQIK (137 aa)) are allosteric domain.

This sequence belongs to the CarB family. In terms of assembly, composed of two chains; the small (or glutamine) chain promotes the hydrolysis of glutamine to ammonia, which is used by the large (or ammonia) chain to synthesize carbamoyl phosphate. Tetramer of heterodimers (alpha,beta)4. Mg(2+) is required as a cofactor. It depends on Mn(2+) as a cofactor.

The enzyme catalyses hydrogencarbonate + L-glutamine + 2 ATP + H2O = carbamoyl phosphate + L-glutamate + 2 ADP + phosphate + 2 H(+). The catalysed reaction is hydrogencarbonate + NH4(+) + 2 ATP = carbamoyl phosphate + 2 ADP + phosphate + 2 H(+). It participates in amino-acid biosynthesis; L-arginine biosynthesis; carbamoyl phosphate from bicarbonate: step 1/1. Its pathway is pyrimidine metabolism; UMP biosynthesis via de novo pathway; (S)-dihydroorotate from bicarbonate: step 1/3. Its function is as follows. Large subunit of the glutamine-dependent carbamoyl phosphate synthetase (CPSase). CPSase catalyzes the formation of carbamoyl phosphate from the ammonia moiety of glutamine, carbonate, and phosphate donated by ATP, constituting the first step of 2 biosynthetic pathways, one leading to arginine and/or urea and the other to pyrimidine nucleotides. The large subunit (synthetase) binds the substrates ammonia (free or transferred from glutamine from the small subunit), hydrogencarbonate and ATP and carries out an ATP-coupled ligase reaction, activating hydrogencarbonate by forming carboxy phosphate which reacts with ammonia to form carbamoyl phosphate. The chain is Carbamoyl phosphate synthase large chain from Escherichia coli (strain K12).